Here is a 394-residue protein sequence, read N- to C-terminus: Na(+)/H(+) antiporter NhaA (394 aa).

A run of 11 helical transmembrane segments spans residues 14-34 (AGGL…NSAL), 59-79 (LLLW…GLEV), 95-115 (VFPA…YLLF), 125-145 (GWAI…ALLG), 154-174 (VFLL…IALF), 179-199 (VSLQ…YMNW), 213-233 (LVLW…GVIV), 254-274 (GLHP…NAGV), 292-312 (IATG…WLAV), 328-348 (IFAV…IASL), and 363-383 (LGIL…LRLV).

Belongs to the NhaA Na(+)/H(+) (TC 2.A.33) antiporter family.

The protein resides in the cell inner membrane. It catalyses the reaction Na(+)(in) + 2 H(+)(out) = Na(+)(out) + 2 H(+)(in). Its function is as follows. Na(+)/H(+) antiporter that extrudes sodium in exchange for external protons. The polypeptide is Na(+)/H(+) antiporter NhaA (Yersinia pseudotuberculosis serotype IB (strain PB1/+)).